The primary structure comprises 171 residues: NADH-quinone oxidoreductase subunit I (171 aa).

4Fe-4S ferredoxin-type domains follow at residues 41–71 (LTRDPDGEERCVACNLCAAVCPVDCIALQKT) and 81–110 (EFFRINFSRCILCGLCEEACPTYAIQLTPD). Residues Cys-51, Cys-54, Cys-57, Cys-61, Cys-90, Cys-93, Cys-96, and Cys-100 each coordinate [4Fe-4S] cluster.

The protein belongs to the complex I 23 kDa subunit family. In terms of assembly, NDH-1 is composed of 14 different subunits. Subunits NuoA, H, J, K, L, M, N constitute the membrane sector of the complex. It depends on [4Fe-4S] cluster as a cofactor.

The protein resides in the cell inner membrane. The catalysed reaction is a quinone + NADH + 5 H(+)(in) = a quinol + NAD(+) + 4 H(+)(out). In terms of biological role, NDH-1 shuttles electrons from NADH, via FMN and iron-sulfur (Fe-S) centers, to quinones in the respiratory chain. The immediate electron acceptor for the enzyme in this species is believed to be ubiquinone. Couples the redox reaction to proton translocation (for every two electrons transferred, four hydrogen ions are translocated across the cytoplasmic membrane), and thus conserves the redox energy in a proton gradient. The polypeptide is NADH-quinone oxidoreductase subunit I (Methylococcus capsulatus (strain ATCC 33009 / NCIMB 11132 / Bath)).